The primary structure comprises 286 residues: Putative sugar uptake protein lmo0176 (286 aa).

The next 8 membrane-spanning stretches (helical) occupy residues 4–26, 33–55, 114–136, 149–167, 177–194, 207–226, 230–252, and 264–283; these read MIAL…FGGS, GMTL…VYTL, LRII…TSYA, GLIT…VVLI, AILP…IMTH, LLLT…MVHA, VGVA…GGII, and LFVI…IGVA.

It belongs to the GRP transporter (TC 2.A.7.5) family.

It localises to the cell membrane. The protein is Putative sugar uptake protein lmo0176 of Listeria monocytogenes serovar 1/2a (strain ATCC BAA-679 / EGD-e).